Reading from the N-terminus, the 472-residue chain is MSQSLFSQPLNVINVGIAMFSDDLKKQHVEVTQLDWTPPGQGNMQVVQALDNIADSPLADKIAAANQQALERIIQSHPVLIGFDQAINVVPGMTAKTILHAGPPITWEKMCGAMKGAVTGALVFEGLAKDLDEAAELAASGEITFSPCHEHDCVGSMAGVTSASMFMHIVKNKTYGNIAYTNMSEQMAKILRMGANDQSVIDRLNWMRDVQGPILRDAMKIIGEIDLRLMLAQALHMGDECHNRNNAGTTLLIQALTPGIIQAGYSVEQQREVFEFVASSDYFSGPTWMAMCKAAMDAAHGIEYSTVVTTMARNGVEFGLRVSGLPGQWFTGPAQQVIGPMFAGYKPEDSGLDIGDSAITETYGIGGFAMATAPAIVALVGGTVEEAIDFSRQMREITLGENPNVTIPLLGFMGVPSAIDITRVGSSGILPVINTAIAHKDAGVGMIGAGIVHPPFACFEKAILGWCERYGV.

It belongs to the AllG family.

This is an uncharacterized protein from Escherichia coli (strain K12).